Reading from the N-terminus, the 159-residue chain is Short coiled-coil protein (159 aa).

Residues 78–146 (MMNADMDAVD…QYIENLMSAS (69 aa)) are a coiled coil.

It belongs to the SCOC family. As to quaternary structure, homodimer. Interacts with ARL1, ARL2 and ARL3. Directly interacts with FEZ1 and UVRAG. The interaction with UVRAG is reduced by amino acid starvation, but the complex is stabilized in the presence of FEZ1. Interacts with NRBF2. In terms of tissue distribution, widely expressed with highest levels in brain, heart and skeletal muscle.

Its subcellular location is the golgi apparatus membrane. It is found in the golgi apparatus. The protein localises to the trans-Golgi network. The protein resides in the cytoplasm. It localises to the cytosol. Functionally, positive regulator of amino acid starvation-induced autophagy. The protein is Short coiled-coil protein (SCOC) of Homo sapiens (Human).